Consider the following 500-residue polypeptide: Cytochrome P450 2D26 (500 aa).

Phosphoserine is present on Ser249. A heme-binding site is contributed by Cys446.

This sequence belongs to the cytochrome P450 family. Heme serves as cofactor.

The protein resides in the endoplasmic reticulum membrane. It is found in the microsome membrane. It catalyses the reaction an organic molecule + reduced [NADPH--hemoprotein reductase] + O2 = an alcohol + oxidized [NADPH--hemoprotein reductase] + H2O + H(+). Its function is as follows. Cytochromes P450 are a group of heme-thiolate monooxygenases. In liver microsomes, this enzyme is involved in an NADPH-dependent electron transport pathway. It oxidizes a variety of structurally unrelated compounds, including steroids, fatty acids, and xenobiotics. This Mus musculus (Mouse) protein is Cytochrome P450 2D26.